Here is a 594-residue protein sequence, read N- to C-terminus: Glutamate decarboxylase 1 (594 aa).

The segment covering 1–13 (MASSTPSSSATSS) has biased composition (low complexity). Residues 1-23 (MASSTPSSSATSSNAGADPNTTN) form a disordered region. Residue Ser78 is modified to Phosphoserine. 190–192 (QLS) contacts 4-aminobutanoate. N6-(pyridoxal phosphate)lysine is present on Lys405. Residue Arg567 coordinates 4-aminobutanoate.

The protein belongs to the group II decarboxylase family. In terms of assembly, homodimer. Pyridoxal 5'-phosphate is required as a cofactor.

It catalyses the reaction L-glutamate + H(+) = 4-aminobutanoate + CO2. Functionally, catalyzes the synthesis of the inhibitory neurotransmitter gamma-aminobutyric acid (GABA) with pyridoxal 5'-phosphate as cofactor. This Bos taurus (Bovine) protein is Glutamate decarboxylase 1 (GAD1).